Reading from the N-terminus, the 361-residue chain is Deoxyribonuclease (361 aa).

The signal sequence occupies residues 1 to 24 (MMHLLRRGAFAILLIVLLPSAALA). Histidine 149 is a catalytic residue.

The protein belongs to the DNase I family. Requires Mg(2+) as cofactor. The cofactor is Ca(2+).

Its subcellular location is the secreted. In terms of biological role, DNA nuclease able to digest short and long DNA substrate. Is resistant to ionic strength and thus active at high salt concentration. This Thioalkalivibrio sp. (strain K90mix) protein is Deoxyribonuclease.